A 691-amino-acid chain; its full sequence is Elongation factor G (691 aa).

The tr-type G domain maps to 6–281 (SRYRNIGIMA…GVVDFLPSPI (276 aa)). GTP contacts are provided by residues 15-22 (AHIDAGKT), 79-83 (DTPGH), and 133-136 (NKMD).

This sequence belongs to the TRAFAC class translation factor GTPase superfamily. Classic translation factor GTPase family. EF-G/EF-2 subfamily.

It is found in the cytoplasm. Catalyzes the GTP-dependent ribosomal translocation step during translation elongation. During this step, the ribosome changes from the pre-translocational (PRE) to the post-translocational (POST) state as the newly formed A-site-bound peptidyl-tRNA and P-site-bound deacylated tRNA move to the P and E sites, respectively. Catalyzes the coordinated movement of the two tRNA molecules, the mRNA and conformational changes in the ribosome. The chain is Elongation factor G from Wolbachia pipientis subsp. Culex pipiens (strain wPip).